A 755-amino-acid polypeptide reads, in one-letter code: Dynamin-1-like protein (755 aa).

N-acetylmethionine is present on Met-1. The Dynamin-type G domain maps to Ile-22 to Pro-315. Positions Gly-32–Ser-39 are G1 motif. Gly-32–Ser-40 serves as a coordination point for GTP. Residues Val-58 to Arg-60 are G2 motif. The segment at Asp-159–Gly-162 is G3 motif. The segment at Thr-228–Asp-231 is G4 motif. GTP-binding positions include Thr-228–Asp-234 and Asn-259–Gln-262. A G5 motif region spans residues Val-258–Ser-261. The middle domain stretch occupies residues Tyr-357 to Ile-502. Residues Asn-461–Glu-704 are interaction with GSK3B. Residues Ala-515–Asn-582 are b domain. The disordered stretch occupies residues Glu-536–Gly-610. Phosphoserine is present on Ser-542. Glycyl lysine isopeptide (Lys-Gly) (interchain with G-Cter in SUMO) cross-links involve residues Lys-545 and Lys-548. Residues Pro-550 to Glu-567 are compositionally biased toward low complexity. Ser-561 carries the phosphoserine modification. Residues Ala-568 to Lys-581 are compositionally biased toward basic and acidic residues. Residues Lys-571 and Lys-581 each participate in a glycyl lysine isopeptide (Lys-Gly) (interchain with G-Cter in SUMO) cross-link. A compositionally biased stretch (gly residues) spans Ala-586–Gly-600. Thr-604 and Thr-605 each carry an O-linked (GlcNAc) threonine glycan. Residue Lys-613 forms a Glycyl lysine isopeptide (Lys-Gly) (interchain with G-Cter in SUMO) linkage. The residue at position 616 (Lys-616) is an N6-acetyllysine; alternate. Lys-616 participates in a covalent cross-link: Glycyl lysine isopeptide (Lys-Gly) (interchain with G-Cter in SUMO); alternate. Residue Lys-625 forms a Glycyl lysine isopeptide (Lys-Gly) (interchain with G-Cter in SUMO) linkage. Residue Ser-626 is modified to Phosphoserine. Lys-627 participates in a covalent cross-link: Glycyl lysine isopeptide (Lys-Gly) (interchain with G-Cter in SUMO). Ser-635 is subject to Phosphoserine; by CDK1. Residue Ser-656 is modified to Phosphoserine; by CAMK1 and PKA. Residue Cys-663 is modified to S-nitrosocysteine. Residues Cys-663–Leu-754 enclose the GED domain. Residues Tyr-673–Lys-687 form an important for homodimerization region.

It belongs to the TRAFAC class dynamin-like GTPase superfamily. Dynamin/Fzo/YdjA family. As to quaternary structure, homotetramer; dimerizes through the N-terminal GTP-middle region of one molecule binding to the GED domain of another DNM1L molecule. Oligomerizes in a GTP-dependent manner to form membrane-associated tubules with a spiral pattern. Interacts with GSK3B and MARCHF5. Interacts (via the GTPase and B domains) with UBE2I; the interaction promotes sumoylation of DNM1L, mainly in its B domain. Interacts with PPP3CA; the interaction dephosphorylates DNM1L and regulates its transition to mitochondria. Interacts with BCL2L1 isoform BCL-X(L) and CLTA; DNM1L and BCL2L1 isoform BCL-X(L) may form a complex in synaptic vesicles that also contains clathrin and MFF. Interacts with MFF; the interaction is inhinited by C11orf65/MFI. Interacts with FIS1. Interacts with MIEF2 and MIEF1; GTP-dependent this regulates GTP hydrolysis and DNM1L oligomerization. Interacts with PGAM5; this interaction leads to dephosphorylation at Ser-656 and activation of GTPase activity and eventually to mitochondria fragmentation. Interacts with RALBP1; during mitosis, recruits DNM1L to the mitochondrion and mediates its activation by the mitotic kinase cyclin B-CDK1. Interacts with FUNDC1; this interaction recruits DNM1L/DRP1 at ER-mitochondria contact sites. In terms of processing, phosphorylation/dephosphorylation events on two sites near the GED domain regulate mitochondrial fission. Phosphorylation on Ser-656 by CAMK1 and PKA inhibits the GTPase activity, leading to a defect in mitochondrial fission promoting mitochondrial elongation. Dephosphorylated on this site by PPP3CA which promotes mitochondrial fission. Phosphorylation on Ser-635 by PINK1 activates the GTPase activity and promotes mitochondrial fission. Phosphorylation on Ser-635 by CDK1 also promotes mitochondrial fission. Phosphorylated in a circadian manner at Ser-656. Dephosphorylated by PGAM5. Post-translationally, sumoylated on various lysine residues within the B domain, probably by MUL1. Sumoylation positively regulates mitochondrial fission. Desumoylated by SENP5 during G2/M transition of mitosis. Appears to be linked to its catalytic activity. S-nitrosylation increases DNM1L dimerization, mitochondrial fission and causes neuronal damage. In terms of processing, O-GlcNAcylation augments the level of the GTP-bound active form of DNM1L and induces translocation from the cytoplasm to mitochondria in cardiomyocytes. It also decreases phosphorylation at Ser-656. Post-translationally, ubiquitination by MARCHF5 affects mitochondrial morphology. In terms of tissue distribution, expressed in all tissues tested (at protein level). Longer isoforms are preferentially expressed in brain.

The protein localises to the cytoplasm. It localises to the cytosol. The protein resides in the golgi apparatus. It is found in the endomembrane system. Its subcellular location is the mitochondrion outer membrane. The protein localises to the peroxisome. It localises to the membrane. The protein resides in the clathrin-coated pit. It is found in the cytoplasmic vesicle. Its subcellular location is the secretory vesicle. The protein localises to the synaptic vesicle membrane. The enzyme catalyses GTP + H2O = GDP + phosphate + H(+). Its function is as follows. Functions in mitochondrial and peroxisomal division. Mediates membrane fission through oligomerization into membrane-associated tubular structures that wrap around the scission site to constrict and sever the mitochondrial membrane through a GTP hydrolysis-dependent mechanism. The specific recruitment at scission sites is mediated by membrane receptors like MFF, MIEF1 and MIEF2 for mitochondrial membranes. While the recruitment by the membrane receptors is GTP-dependent, the following hydrolysis of GTP induces the dissociation from the receptors and allows DNM1L filaments to curl into closed rings that are probably sufficient to sever a double membrane. Acts downstream of PINK1 to promote mitochondrial fission in a PRKN-dependent manner. Plays an important role in mitochondrial fission during mitosis. Through its function in mitochondrial division, ensures the survival of at least some types of postmitotic neurons, including Purkinje cells, by suppressing oxidative damage. Required for normal brain development, including that of cerebellum. Facilitates developmentally regulated apoptosis during neural tube formation. Required for a normal rate of cytochrome c release and caspase activation during apoptosis; this requirement may depend upon the cell type and the physiological apoptotic cues. Required for formation of endocytic vesicles. Proposed to regulate synaptic vesicle membrane dynamics through association with BCL2L1 isoform Bcl-X(L) which stimulates its GTPase activity in synaptic vesicles; the function may require its recruitment by MFF to clathrin-containing vesicles. Required for programmed necrosis execution. Rhythmic control of its activity following phosphorylation at Ser-656 is essential for the circadian control of mitochondrial ATP production. The polypeptide is Dynamin-1-like protein (Rattus norvegicus (Rat)).